Reading from the N-terminus, the 79-residue chain is RNA-binding protein Hfq (79 aa).

One can recognise a Sm domain in the interval 10 to 69 (DPFLNALRKEHVPVSIYLVNGIKLQGNIESFDQYVVLLRNTVTQMVYKHAISTVVPARAV).

It belongs to the Hfq family. As to quaternary structure, homohexamer.

Its function is as follows. RNA chaperone that binds small regulatory RNA (sRNAs) and mRNAs to facilitate mRNA translational regulation in response to envelope stress, environmental stress and changes in metabolite concentrations. Also binds with high specificity to tRNAs. The chain is RNA-binding protein Hfq from Cupriavidus metallidurans (strain ATCC 43123 / DSM 2839 / NBRC 102507 / CH34) (Ralstonia metallidurans).